The sequence spans 136 residues: Large ribosomal subunit protein uL16 (136 aa).

This sequence belongs to the universal ribosomal protein uL16 family. In terms of assembly, part of the 50S ribosomal subunit.

Its function is as follows. Binds 23S rRNA and is also seen to make contacts with the A and possibly P site tRNAs. The protein is Large ribosomal subunit protein uL16 of Hamiltonella defensa subsp. Acyrthosiphon pisum (strain 5AT).